The chain runs to 255 residues: Hydroxyacylglutathione hydrolase (255 aa).

Zn(2+) is bound by residues His-56, His-58, Asp-60, His-61, His-114, Asp-133, and His-171.

It belongs to the metallo-beta-lactamase superfamily. Glyoxalase II family. As to quaternary structure, monomer. The cofactor is Zn(2+).

It carries out the reaction an S-(2-hydroxyacyl)glutathione + H2O = a 2-hydroxy carboxylate + glutathione + H(+). The protein operates within secondary metabolite metabolism; methylglyoxal degradation; (R)-lactate from methylglyoxal: step 2/2. Functionally, thiolesterase that catalyzes the hydrolysis of S-D-lactoyl-glutathione to form glutathione and D-lactic acid. This chain is Hydroxyacylglutathione hydrolase, found in Cereibacter sphaeroides (strain ATCC 17029 / ATH 2.4.9) (Rhodobacter sphaeroides).